An 877-amino-acid polypeptide reads, in one-letter code: Leucine--tRNA ligase (877 aa).

Positions 43-53 match the 'HIGH' region motif; the sequence is PYPSGRIHMGH. A 'KMSKS' region motif is present at residues 628–632; sequence KMSKS. Position 631 (Lys631) interacts with ATP.

This sequence belongs to the class-I aminoacyl-tRNA synthetase family.

The protein resides in the cytoplasm. The enzyme catalyses tRNA(Leu) + L-leucine + ATP = L-leucyl-tRNA(Leu) + AMP + diphosphate. The chain is Leucine--tRNA ligase from Brucella anthropi (strain ATCC 49188 / DSM 6882 / CCUG 24695 / JCM 21032 / LMG 3331 / NBRC 15819 / NCTC 12168 / Alc 37) (Ochrobactrum anthropi).